A 255-amino-acid chain; its full sequence is SKA complex subunit 1 (255 aa).

Residue A2 is modified to N-acetylalanine. A coiled-coil region spans residues 49–91 (INELLNKLELEIQYQEQTNNSLKELCESLEEDYKDIEHLKENV). The flexiple loop that anchors MAPRE1 stretch occupies residues 92–132 (PSHLPQVTVTQSCVKGSDLDPEEPIKVEEPEPVKKPPKEQR). The short motif at 93-96 (SHLP) is the SXLP motif; mediates interaction with MAPRE1, targeting to microtubule plus ends, stabilization on kinetochores and is required for proper chromosome alignment to the metaphase plate element. The tract at residues 106–131 (KGSDLDPEEPIKVEEPEPVKKPPKEQ) is disordered. The span at 114–131 (EPIKVEEPEPVKKPPKEQ) shows a compositional bias: basic and acidic residues. The tract at residues 132–255 (RSIKEMPFIT…GGGLTRYVIT (124 aa)) is binds microtubules and protein phosphatase PP1 subunit PPP1CA. T157 bears the Phosphothreonine; by AURKB mark. Position 242 is a phosphoserine; by AURKB (S242).

The protein belongs to the SKA1 family. As to quaternary structure, component of the SKA complex, composed of SKA1, SKA2 and SKA3. The SKA complex is a homodimer organized around a central W-shaped coiled-coil structure, formed by the interacting domains of SKA1, SKA2, and SKA3, each end of the 'W' is extended further by the C-terminal microtubule-binding domains of SKA1 and SKA3; the complex forms extended structures on microtubules. Interacts (via SXLP motif) with MAPRE1 (via C-terminus); the interaction is direct and stabilizes the kinetochore-microtubule attachment of the SKA1 complex. Interacts (via C-terminus) with protein phosphatase PP1 subunit PPP1CA; the interaction is direct and required for recruitment of PPP1CA to the kinetochore. Interacts with the NDC80 complex; the interaction is required to establish kinetochore-microtubule end-on attachments. Phosphorylated by AURKB at Thr-157 and Ser-242 which negatively regulates the association of the SKA complex with kinetochores to allow correction of aberrant kinetochore-microtubule interactions and promote mitotic sister chromatid biorientation.

The protein localises to the cytoplasm. It localises to the cytoskeleton. Its subcellular location is the spindle. It is found in the chromosome. The protein resides in the centromere. The protein localises to the kinetochore. It localises to the microtubule organizing center. Its subcellular location is the centrosome. Functionally, component of the SKA complex, a microtubule plus end-binding complex of the outer kinetochore that stabilizes spindle microtubule-kinetochore attachments, promotes alignment of chromosomes at the mitotic spindle equator (chromosome congression) and assists suppression of the spindle assembly checkpoint. Kinetochores, consisting of a centromere-associated inner segment and a microtubule-contacting outer segment, play a crucial role in chromosome segregation by mediating the physical connection between centromeric DNA and spindle microtubules. The outer kinetochore is made up of the ten-subunit KMN network complex, comprising the MIS12, NDC80 and KNL1 complexes, and auxiliary microtubule-associated components such as the SKA complex; together they connect the outer kinetochore with the inner kinetochore, bind microtubules, and mediate interactions with mitotic checkpoint proteins that delay anaphase until chromosomes are bioriented on the spindle. The SKA complex is loaded onto bioriented kinetochores and it facilitates chromosome congression by stabilizing microtubules together with MAPRE1, and end-on attachment of the NDC80 complex to depolymerizing spindle microtubules, thereby assisting the poleward-moving kinetochore in withstanding microtubule pulling forces. The complex associates with dynamic microtubule plus-ends and can track both depolymerizing and elongating microtubules. The complex recruits protein phosphatase 1 (PP1) to the kinetochore in prometaphase and metaphase, to oppose spindle assembly checkpoint signaling and promote the onset of anaphase. In the complex, it mediates interactions with microtubules. It also stimulates AURKB/Aurora B catalytic activity. During meiosis the SKA complex stabilizes the meiotic spindle and is required for its migration to the cortex. This Homo sapiens (Human) protein is SKA complex subunit 1 (SKA1).